The chain runs to 198 residues: MKSIEIKGTVRTDVGKKATHELRKNNGVPCVLYGVQKDENGLPVATHFSVPTEGLRNLVYTPHIYVVDLNIDGKIVNAILKDIQFHPVTDAILHVDFYQIDEAKPIVMEVPVQLEGLAEGVRAGGKLALQLRKLKVKALYNVIPERLVVDVTSLGLGKTVKVGELSYEGLELINAKEAVVCAVKLTRAARGAAATAGK.

Belongs to the bacterial ribosomal protein bL25 family. CTC subfamily. Part of the 50S ribosomal subunit; part of the 5S rRNA/L5/L18/L25 subcomplex. Contacts the 5S rRNA. Binds to the 5S rRNA independently of L5 and L18.

This is one of the proteins that binds to the 5S RNA in the ribosome where it forms part of the central protuberance. The polypeptide is Large ribosomal subunit protein bL25 (Phocaeicola vulgatus (strain ATCC 8482 / DSM 1447 / JCM 5826 / CCUG 4940 / NBRC 14291 / NCTC 11154) (Bacteroides vulgatus)).